The primary structure comprises 442 residues: ATP-dependent protease ATPase subunit HslU (442 aa).

ATP contacts are provided by residues Ile-18 and 60-65 (GVGKTE). The segment at 133–156 (DALLPKPKNDWDNTDSDTSSNTRQ) is disordered. Positions 255, 320, and 392 each coordinate ATP.

The protein belongs to the ClpX chaperone family. HslU subfamily. As to quaternary structure, a double ring-shaped homohexamer of HslV is capped on each side by a ring-shaped HslU homohexamer. The assembly of the HslU/HslV complex is dependent on binding of ATP.

It is found in the cytoplasm. In terms of biological role, ATPase subunit of a proteasome-like degradation complex; this subunit has chaperone activity. The binding of ATP and its subsequent hydrolysis by HslU are essential for unfolding of protein substrates subsequently hydrolyzed by HslV. HslU recognizes the N-terminal part of its protein substrates and unfolds these before they are guided to HslV for hydrolysis. The protein is ATP-dependent protease ATPase subunit HslU of Shewanella sp. (strain ANA-3).